A 348-amino-acid polypeptide reads, in one-letter code: Isopentenyl-diphosphate delta-isomerase (348 aa).

Residue 9–10 (RK) participates in substrate binding. FMN contacts are provided by residues 68 to 70 (AMT), Ser98, and Asn127. Residue Gln157 participates in substrate binding. Mg(2+) is bound at residue Glu158. FMN contacts are provided by residues Lys188, Ser213, Thr218, and 286–287 (AG).

This sequence belongs to the IPP isomerase type 2 family. In terms of assembly, homooctamer. Dimer of tetramers. Requires FMN as cofactor. NADPH is required as a cofactor. It depends on Mg(2+) as a cofactor.

The protein localises to the cytoplasm. It carries out the reaction isopentenyl diphosphate = dimethylallyl diphosphate. Involved in the biosynthesis of isoprenoids. Catalyzes the 1,3-allylic rearrangement of the homoallylic substrate isopentenyl (IPP) to its allylic isomer, dimethylallyl diphosphate (DMAPP). This is Isopentenyl-diphosphate delta-isomerase from Limosilactobacillus reuteri subsp. reuteri (strain JCM 1112) (Lactobacillus reuteri).